Consider the following 124-residue polypeptide: Small ribosomal subunit protein uS12 (124 aa).

Position 89 is a 3-methylthioaspartic acid (D89). The tract at residues 105 to 124 is disordered; that stretch reads SGVSDRRQGRSKYGAKRPKS. The span at 113–124 shows a compositional bias: basic residues; the sequence is GRSKYGAKRPKS.

The protein belongs to the universal ribosomal protein uS12 family. As to quaternary structure, part of the 30S ribosomal subunit. Contacts proteins S8 and S17. May interact with IF1 in the 30S initiation complex.

With S4 and S5 plays an important role in translational accuracy. In terms of biological role, interacts with and stabilizes bases of the 16S rRNA that are involved in tRNA selection in the A site and with the mRNA backbone. Located at the interface of the 30S and 50S subunits, it traverses the body of the 30S subunit contacting proteins on the other side and probably holding the rRNA structure together. The combined cluster of proteins S8, S12 and S17 appears to hold together the shoulder and platform of the 30S subunit. The protein is Small ribosomal subunit protein uS12 of Colwellia psychrerythraea (strain 34H / ATCC BAA-681) (Vibrio psychroerythus).